The chain runs to 231 residues: 6-hydroxymethyl-7,8-dihydropterin pyrophosphokinase (231 aa).

It belongs to the archaeal 6-HMPDK family. It depends on Mg(2+) as a cofactor.

It carries out the reaction 6-hydroxymethyl-7,8-dihydropterin + ATP = (7,8-dihydropterin-6-yl)methyl diphosphate + AMP + H(+). In terms of biological role, catalyzes the transfer of diphosphate from ATP to 6-hydroxymethyl-7,8-dihydropterin (6-HMD), leading to 6-hydroxymethyl-7,8-dihydropterin diphosphate (6-HMDP). To a lesser extent, can also use CTP, UTP, and GTP as the nucleotide triphosphate substrate. The sequence is that of 6-hydroxymethyl-7,8-dihydropterin pyrophosphokinase from Pyrococcus furiosus (strain ATCC 43587 / DSM 3638 / JCM 8422 / Vc1).